The primary structure comprises 178 residues: Large ribosomal subunit protein eL20 (178 aa).

Belongs to the eukaryotic ribosomal protein eL20 family.

This Oryza sativa subsp. japonica (Rice) protein is Large ribosomal subunit protein eL20 (RPL18A).